A 400-amino-acid chain; its full sequence is CCA-adding enzyme (400 aa).

G28 and R31 together coordinate ATP. Residues G28 and R31 each coordinate CTP. Mg(2+)-binding residues include D41 and D43. ATP-binding residues include R112, D155, R158, R161, and R164. CTP-binding residues include R112, D155, R158, R161, and R164.

It belongs to the tRNA nucleotidyltransferase/poly(A) polymerase family. Bacterial CCA-adding enzyme type 3 subfamily. As to quaternary structure, homodimer. Mg(2+) is required as a cofactor.

It carries out the reaction a tRNA precursor + 2 CTP + ATP = a tRNA with a 3' CCA end + 3 diphosphate. The catalysed reaction is a tRNA with a 3' CCA end + 2 CTP + ATP = a tRNA with a 3' CCACCA end + 3 diphosphate. Functionally, catalyzes the addition and repair of the essential 3'-terminal CCA sequence in tRNAs without using a nucleic acid template. Adds these three nucleotides in the order of C, C, and A to the tRNA nucleotide-73, using CTP and ATP as substrates and producing inorganic pyrophosphate. tRNA 3'-terminal CCA addition is required both for tRNA processing and repair. Also involved in tRNA surveillance by mediating tandem CCA addition to generate a CCACCA at the 3' terminus of unstable tRNAs. While stable tRNAs receive only 3'-terminal CCA, unstable tRNAs are marked with CCACCA and rapidly degraded. The polypeptide is CCA-adding enzyme (Staphylococcus aureus (strain MRSA252)).